Consider the following 93-residue polypeptide: Putative hemolysin E-like protein (93 aa).

It belongs to the hemolysin E family.

The protein is Putative hemolysin E-like protein of Escherichia coli O6:H1 (strain CFT073 / ATCC 700928 / UPEC).